Here is a 128-residue protein sequence, read N- to C-terminus: Sulfurtransferase TusD (128 aa).

Residue cysteine 78 is the Cysteine persulfide intermediate of the active site.

It belongs to the DsrE/TusD family. Heterohexamer, formed by a dimer of trimers. The hexameric TusBCD complex contains 2 copies each of TusB, TusC and TusD. The TusBCD complex interacts with TusE.

Its subcellular location is the cytoplasm. Functionally, part of a sulfur-relay system required for 2-thiolation of 5-methylaminomethyl-2-thiouridine (mnm(5)s(2)U) at tRNA wobble positions. Accepts sulfur from TusA and transfers it in turn to TusE. This chain is Sulfurtransferase TusD, found in Shigella flexneri serotype 5b (strain 8401).